Consider the following 75-residue polypeptide: KYKPTDATTNPSLILQAKFLEELQNSKKIYNYYKKESVVEHLSESSAKKLEMTEANFRWEMNEDKFAVDAVKLEK.

This sequence belongs to the transaldolase family. Type 1 subfamily. Homodimer. Post-translationally, phosphorylated. Predominantly expressed in Y-organs.

The protein localises to the cytoplasm. It carries out the reaction D-sedoheptulose 7-phosphate + D-glyceraldehyde 3-phosphate = D-erythrose 4-phosphate + beta-D-fructose 6-phosphate. It functions in the pathway carbohydrate degradation; pentose phosphate pathway; D-glyceraldehyde 3-phosphate and beta-D-fructose 6-phosphate from D-ribose 5-phosphate and D-xylulose 5-phosphate (non-oxidative stage): step 2/3. Functionally, transaldolase is important for the balance of metabolites in the pentose-phosphate pathway. May play a role in the conversion of sterols into ecdysteroids via NADPH. The sequence is that of Transaldolase from Carcinus maenas (Common shore crab).